A 226-amino-acid polypeptide reads, in one-letter code: PKHD-type hydroxylase Bpet2704 (226 aa).

Residues 78-178 enclose the Fe2OG dioxygenase domain; it reads KIFPPLFNRY…RISAFFWMQS (101 aa). Residues His96, Asp98, and His159 each contribute to the Fe cation site. Residue Arg169 participates in 2-oxoglutarate binding.

Requires Fe(2+) as cofactor. L-ascorbate is required as a cofactor.

In Bordetella petrii (strain ATCC BAA-461 / DSM 12804 / CCUG 43448), this protein is PKHD-type hydroxylase Bpet2704.